The following is a 116-amino-acid chain: Large ribosomal subunit protein uL22 (116 aa).

This sequence belongs to the universal ribosomal protein uL22 family. In terms of assembly, part of the 50S ribosomal subunit.

This protein binds specifically to 23S rRNA; its binding is stimulated by other ribosomal proteins, e.g. L4, L17, and L20. It is important during the early stages of 50S assembly. It makes multiple contacts with different domains of the 23S rRNA in the assembled 50S subunit and ribosome. Its function is as follows. The globular domain of the protein is located near the polypeptide exit tunnel on the outside of the subunit, while an extended beta-hairpin is found that lines the wall of the exit tunnel in the center of the 70S ribosome. The sequence is that of Large ribosomal subunit protein uL22 from Gloeobacter violaceus (strain ATCC 29082 / PCC 7421).